Reading from the N-terminus, the 77-residue chain is Large ribosomal subunit protein bL28 (77 aa).

The protein belongs to the bacterial ribosomal protein bL28 family.

This chain is Large ribosomal subunit protein bL28, found in Dechloromonas aromatica (strain RCB).